A 234-amino-acid polypeptide reads, in one-letter code: Orotate phosphoribosyltransferase (234 aa).

Lys-30 lines the 5-phospho-alpha-D-ribose 1-diphosphate pocket. Orotate is bound at residue 38–39 (FF). 5-phospho-alpha-D-ribose 1-diphosphate is bound by residues 76–77 (YK), Arg-103, Lys-104, Lys-107, His-109, and 128–136 (DDVITAGTA). Thr-132 and Arg-160 together coordinate orotate.

Belongs to the purine/pyrimidine phosphoribosyltransferase family. PyrE subfamily. Homodimer. It depends on Mg(2+) as a cofactor.

It carries out the reaction orotidine 5'-phosphate + diphosphate = orotate + 5-phospho-alpha-D-ribose 1-diphosphate. The protein operates within pyrimidine metabolism; UMP biosynthesis via de novo pathway; UMP from orotate: step 1/2. Its function is as follows. Catalyzes the transfer of a ribosyl phosphate group from 5-phosphoribose 1-diphosphate to orotate, leading to the formation of orotidine monophosphate (OMP). In Chromohalobacter salexigens (strain ATCC BAA-138 / DSM 3043 / CIP 106854 / NCIMB 13768 / 1H11), this protein is Orotate phosphoribosyltransferase.